The following is a 537-amino-acid chain: Tripeptidyl aminopeptidase (537 aa).

Residues 1-36 (MRKSSIRRRATAFGTAGALVTATLIAGAVSAPAASA) form the signal peptide. Positions 37–39 (APA) are excised as a propeptide. Positions 119–497 (GALIYNPGGP…SRLITERDAG (379 aa)) constitute an AB hydrolase-1 domain. The active-site Nucleophile is Ser-245. Asp-470 is an active-site residue. His-499 serves as the catalytic Proton donor.

Belongs to the peptidase S33 family.

The protein localises to the secreted. Functionally, cleaves tripeptides from the N-termini of proteins. Does not cleave mono- or dipeptides, or N-terminally blocked peptides. The polypeptide is Tripeptidyl aminopeptidase (Streptomyces lividans).